Reading from the N-terminus, the 432-residue chain is MSAPSRFDRGHTDDLMTFLSASPTPYHAVASAAARLEKAGFRQVAETDAWEATSGGKYVLRGGAIVAWYVPEGAAAHTPFRIVGAHTDSPNLRVKPRPDTGAHGWRQVAVEIYGGPLMNSWLDRDLGLAGRLSLRDGSTRLVDVDRPLLRVPQLAIHMDRNVSTEGLKLDKQRHLQPVWGLGDSVRDGDLIAFLEDEAGLARGEVTGWDLMTHSVEPPAYLGRDRELVAGPRMDNLLSVHAGTAALASVAASGADLPYIPVLAAFDHEETGSQSDTGADGPLLGGVLERSVFARGGSYEDRARAFAGTVCLSSDTGHAVHPNYAERHDPTHHPRINGGPILKVNVNNRYATDGSGRAVFAAACEKADIPFQTFVSNNSMPCGTTIGPITAARHGISTVDIGVAILSMHSARELCGADDPHLLANALVAFLQP.

Zn(2+)-binding residues include His-86, His-157, and His-408.

The protein belongs to the peptidase M18 family. The cofactor is Zn(2+).

This chain is Probable M18 family aminopeptidase 2 (apeB), found in Streptomyces coelicolor (strain ATCC BAA-471 / A3(2) / M145).